The primary structure comprises 136 residues: Large ribosomal subunit protein uL16 (136 aa).

It belongs to the universal ribosomal protein uL16 family. As to quaternary structure, part of the 50S ribosomal subunit.

In terms of biological role, binds 23S rRNA and is also seen to make contacts with the A and possibly P site tRNAs. The chain is Large ribosomal subunit protein uL16 from Histophilus somni (strain 129Pt) (Haemophilus somnus).